Here is a 124-residue protein sequence, read N- to C-terminus: Glycine cleavage system H protein (124 aa).

One can recognise a Lipoyl-binding domain in the interval 22–104 (VATVGITEFA…YGAGWLFRVE (83 aa)). At K63 the chain carries N6-lipoyllysine.

Belongs to the GcvH family. The glycine cleavage system is composed of four proteins: P, T, L and H. It depends on (R)-lipoate as a cofactor.

Its function is as follows. The glycine cleavage system catalyzes the degradation of glycine. The H protein shuttles the methylamine group of glycine from the P protein to the T protein. The polypeptide is Glycine cleavage system H protein (Beutenbergia cavernae (strain ATCC BAA-8 / DSM 12333 / CCUG 43141 / JCM 11478 / NBRC 16432 / NCIMB 13614 / HKI 0122)).